The sequence spans 84 residues: U8-theraphotoxin-Hhn1c 2 (84 aa).

Residues Met-1–Cys-21 form the signal peptide. 5 disulfides stabilise this stretch: Cys-23–Cys-35, Cys-29–Cys-44, Cys-34–Cys-67, Cys-54–Cys-75, and Cys-69–Cys-81.

The protein belongs to the AVIT (prokineticin) family. As to expression, expressed by the venom gland.

Its subcellular location is the secreted. The chain is U8-theraphotoxin-Hhn1c 2 from Cyriopagopus hainanus (Chinese bird spider).